A 190-amino-acid chain; its full sequence is Small ribosomal subunit protein uS5 (190 aa).

One can recognise an S5 DRBM domain in the interval 22 to 85 (FVDKLVHINR…ESAKRNLTRV (64 aa)).

Belongs to the universal ribosomal protein uS5 family. In terms of assembly, part of the 30S ribosomal subunit. Contacts proteins S4 and S8.

Functionally, with S4 and S12 plays an important role in translational accuracy. Located at the back of the 30S subunit body where it stabilizes the conformation of the head with respect to the body. The sequence is that of Small ribosomal subunit protein uS5 from Rhodopseudomonas palustris (strain BisA53).